We begin with the raw amino-acid sequence, 259 residues long: Leucyl/phenylalanyl-tRNA--protein transferase (259 aa).

It belongs to the L/F-transferase family.

The protein resides in the cytoplasm. It catalyses the reaction N-terminal L-lysyl-[protein] + L-leucyl-tRNA(Leu) = N-terminal L-leucyl-L-lysyl-[protein] + tRNA(Leu) + H(+). The enzyme catalyses N-terminal L-arginyl-[protein] + L-leucyl-tRNA(Leu) = N-terminal L-leucyl-L-arginyl-[protein] + tRNA(Leu) + H(+). It carries out the reaction L-phenylalanyl-tRNA(Phe) + an N-terminal L-alpha-aminoacyl-[protein] = an N-terminal L-phenylalanyl-L-alpha-aminoacyl-[protein] + tRNA(Phe). In terms of biological role, functions in the N-end rule pathway of protein degradation where it conjugates Leu, Phe and, less efficiently, Met from aminoacyl-tRNAs to the N-termini of proteins containing an N-terminal arginine or lysine. This chain is Leucyl/phenylalanyl-tRNA--protein transferase, found in Teredinibacter turnerae (strain ATCC 39867 / T7901).